The chain runs to 206 residues: Crossover junction endodeoxyribonuclease RuvC (206 aa).

Active-site residues include aspartate 7, glutamate 67, and aspartate 138. Positions 7, 67, and 138 each coordinate Mg(2+).

Belongs to the RuvC family. In terms of assembly, homodimer which binds Holliday junction (HJ) DNA. The HJ becomes 2-fold symmetrical on binding to RuvC with unstacked arms; it has a different conformation from HJ DNA in complex with RuvA. In the full resolvosome a probable DNA-RuvA(4)-RuvB(12)-RuvC(2) complex forms which resolves the HJ. Requires Mg(2+) as cofactor.

The protein localises to the cytoplasm. It carries out the reaction Endonucleolytic cleavage at a junction such as a reciprocal single-stranded crossover between two homologous DNA duplexes (Holliday junction).. Its function is as follows. The RuvA-RuvB-RuvC complex processes Holliday junction (HJ) DNA during genetic recombination and DNA repair. Endonuclease that resolves HJ intermediates. Cleaves cruciform DNA by making single-stranded nicks across the HJ at symmetrical positions within the homologous arms, yielding a 5'-phosphate and a 3'-hydroxyl group; requires a central core of homology in the junction. The consensus cleavage sequence is 5'-(A/T)TT(C/G)-3'. Cleavage occurs on the 3'-side of the TT dinucleotide at the point of strand exchange. HJ branch migration catalyzed by RuvA-RuvB allows RuvC to scan DNA until it finds its consensus sequence, where it cleaves and resolves the cruciform DNA. The sequence is that of Crossover junction endodeoxyribonuclease RuvC from Anaeromyxobacter sp. (strain Fw109-5).